The primary structure comprises 483 residues: MNYGLTHTPSLTTSECLVLGVFSDLALPDFATAIDNEQQGLIKKLCQRVPEPGNTVWQTDVEGHSLLIIQCGKKEEFSANSLQKRVGEITEALIKQRFSSATVCLPRLNQESAEWQLEQMIVQIDNLRYQLLDFKTKHAKSHKLESVIFHLPGATEKSLEMAKAIVTGVEFCRDLANMPANICTPTYLGEQAISLSKQFDQISCQVIGPEEIKEMGMGALLAVAQGSDQPPRLIDIHYHGNKNSAPVILVGKGITFDSGGLSIKPANAMDEMKYDMSGAASVLGVIKACALLKLPINLIGIIASAENLISGSAVKSGDIVTTMSGQTVEIINTDAEGRLVLADALTYAERYNPDFVIDIATLTGAIIVALGNIATGYMTRDEQLAKSIECAANESQDKVWRMPLDEAYQDALESPLADMINAGFDRSAGSITAACFLSRFTEKYRWAHLDIAGTAWISGKKRNATGRPVPLLIQLLRHVANSR.

Mn(2+) is bound by residues Lys252 and Asp257. Lys264 is an active-site residue. The Mn(2+) site is built by Asp275, Asp334, and Glu336. Arg338 is an active-site residue.

This sequence belongs to the peptidase M17 family. The cofactor is Mn(2+).

The protein localises to the cytoplasm. The catalysed reaction is Release of an N-terminal amino acid, Xaa-|-Yaa-, in which Xaa is preferably Leu, but may be other amino acids including Pro although not Arg or Lys, and Yaa may be Pro. Amino acid amides and methyl esters are also readily hydrolyzed, but rates on arylamides are exceedingly low.. The enzyme catalyses Release of an N-terminal amino acid, preferentially leucine, but not glutamic or aspartic acids.. Its function is as follows. Presumably involved in the processing and regular turnover of intracellular proteins. Catalyzes the removal of unsubstituted N-terminal amino acids from various peptides. In Legionella pneumophila (strain Paris), this protein is Probable cytosol aminopeptidase.